The chain runs to 342 residues: UDP-3-O-acylglucosamine N-acyltransferase (342 aa).

His241 serves as the catalytic Proton acceptor.

This sequence belongs to the transferase hexapeptide repeat family. LpxD subfamily. As to quaternary structure, homotrimer.

It carries out the reaction a UDP-3-O-[(3R)-3-hydroxyacyl]-alpha-D-glucosamine + a (3R)-hydroxyacyl-[ACP] = a UDP-2-N,3-O-bis[(3R)-3-hydroxyacyl]-alpha-D-glucosamine + holo-[ACP] + H(+). The protein operates within bacterial outer membrane biogenesis; LPS lipid A biosynthesis. Catalyzes the N-acylation of UDP-3-O-acylglucosamine using 3-hydroxyacyl-ACP as the acyl donor. Is involved in the biosynthesis of lipid A, a phosphorylated glycolipid that anchors the lipopolysaccharide to the outer membrane of the cell. This chain is UDP-3-O-acylglucosamine N-acyltransferase, found in Pasteurella multocida (strain Pm70).